Consider the following 456-residue polypeptide: MERTCLAIILAAGESTRMKSAMSKVLHPVAGRAMISHVVDALASASISDVALVVGRDAEAVAAAANTGDVAVTALLQKERLGTAHAVLAAREAIAKGYDDILVVFGDTPLITAAPLEAARDGLAAGNDVVVIGFQAADPTGYGRLIVEGDALVAIREHRDASEEERRITYCNGGLMAIDGRKALDLLDRVGNTNAKGEYYLTDLVEIVRSLGGRAIAVEAPEEELTGCNTRAELAYIERLWQQRRRHELMLAGVSMVAPETVFLSWDTALAQDVLVEPNVVFGPGVRVESGAIIHAFSHLEGAHVRAGAAVGPFARLRTGADLGANSKVGNFCEVKKAEIGAGAKVSHLTYIGDAFVGAGTNIGAGTITCNYDGVNKHVTRIGANAFIGSNSALVAPVSIGDGALIASGSVITEDVPADAVAFGRARQEVKPGRAPILRERYKAEKLARKIAKAAE.

The tract at residues M1 to R231 is pyrophosphorylase. UDP-N-acetyl-alpha-D-glucosamine-binding positions include L10 to G13, K24, Q77, and G82 to T83. D107 is a Mg(2+) binding site. The UDP-N-acetyl-alpha-D-glucosamine site is built by G143, E157, N172, and N229. N229 serves as a coordination point for Mg(2+). Positions A232–A252 are linker. The segment at G253–E456 is N-acetyltransferase. Residues R318 and K336 each coordinate UDP-N-acetyl-alpha-D-glucosamine. Catalysis depends on H348, which acts as the Proton acceptor. Residues Y351 and N362 each coordinate UDP-N-acetyl-alpha-D-glucosamine. Residues A365, N371–Y372, S390, S408, and R425 each bind acetyl-CoA.

In the N-terminal section; belongs to the N-acetylglucosamine-1-phosphate uridyltransferase family. The protein in the C-terminal section; belongs to the transferase hexapeptide repeat family. Homotrimer. Mg(2+) serves as cofactor.

Its subcellular location is the cytoplasm. It catalyses the reaction alpha-D-glucosamine 1-phosphate + acetyl-CoA = N-acetyl-alpha-D-glucosamine 1-phosphate + CoA + H(+). The catalysed reaction is N-acetyl-alpha-D-glucosamine 1-phosphate + UTP + H(+) = UDP-N-acetyl-alpha-D-glucosamine + diphosphate. The protein operates within nucleotide-sugar biosynthesis; UDP-N-acetyl-alpha-D-glucosamine biosynthesis; N-acetyl-alpha-D-glucosamine 1-phosphate from alpha-D-glucosamine 6-phosphate (route II): step 2/2. Its pathway is nucleotide-sugar biosynthesis; UDP-N-acetyl-alpha-D-glucosamine biosynthesis; UDP-N-acetyl-alpha-D-glucosamine from N-acetyl-alpha-D-glucosamine 1-phosphate: step 1/1. It participates in bacterial outer membrane biogenesis; LPS lipid A biosynthesis. Its function is as follows. Catalyzes the last two sequential reactions in the de novo biosynthetic pathway for UDP-N-acetylglucosamine (UDP-GlcNAc). The C-terminal domain catalyzes the transfer of acetyl group from acetyl coenzyme A to glucosamine-1-phosphate (GlcN-1-P) to produce N-acetylglucosamine-1-phosphate (GlcNAc-1-P), which is converted into UDP-GlcNAc by the transfer of uridine 5-monophosphate (from uridine 5-triphosphate), a reaction catalyzed by the N-terminal domain. This is Bifunctional protein GlmU from Sinorhizobium medicae (strain WSM419) (Ensifer medicae).